The chain runs to 920 residues: Isoleucine--tRNA ligase (920 aa).

The short motif at Pro-57–His-67 is the 'HIGH' region element. Glu-560 is a binding site for L-isoleucyl-5'-AMP. A 'KMSKS' region motif is present at residues Lys-601 to Ser-605. Lys-604 is a binding site for ATP. Zn(2+) contacts are provided by Cys-890, Cys-893, Cys-910, and Cys-913.

The protein belongs to the class-I aminoacyl-tRNA synthetase family. IleS type 1 subfamily. In terms of assembly, monomer. The cofactor is Zn(2+).

It is found in the cytoplasm. The enzyme catalyses tRNA(Ile) + L-isoleucine + ATP = L-isoleucyl-tRNA(Ile) + AMP + diphosphate. Functionally, catalyzes the attachment of isoleucine to tRNA(Ile). As IleRS can inadvertently accommodate and process structurally similar amino acids such as valine, to avoid such errors it has two additional distinct tRNA(Ile)-dependent editing activities. One activity is designated as 'pretransfer' editing and involves the hydrolysis of activated Val-AMP. The other activity is designated 'posttransfer' editing and involves deacylation of mischarged Val-tRNA(Ile). This is Isoleucine--tRNA ligase from Caldicellulosiruptor saccharolyticus (strain ATCC 43494 / DSM 8903 / Tp8T 6331).